The following is a 202-amino-acid chain: Transmembrane 4 L6 family member 1 (202 aa).

Topologically, residues 1–9 are cytoplasmic; that stretch reads MCSSKCTRY. A helical membrane pass occupies residues 10-30; the sequence is IGHSLVVFAVLCIVANILLYF. At 31–49 the chain is on the extracellular side; that stretch reads PNGETKYAYEDHLSRFVWF. The chain crosses the membrane as a helical span at residues 50-70; the sequence is FAGIVGGGLLILLPAFVFLGL. Residues 71–93 are Cytoplasmic-facing; sequence EGEDCCGCWSCENYGKRCTMLSS. A helical membrane pass occupies residues 94 to 114; it reads IMAALIGIAGSGYCVIVAALG. Residues 115–161 lie on the Extracellular side of the membrane; sequence LAEGPKCGDSHGMWNYTFANTDGQYLLDPTTWSKCHEPNNIVEWNVT. Residues Asn129 and Asn159 are each glycosylated (N-linked (GlcNAc...) asparagine). A helical transmembrane segment spans residues 162 to 182; that stretch reads LFSILLALGGLEFILCLIQVI. Residues 183-202 lie on the Cytoplasmic side of the membrane; sequence NGVLEGMCSYCCSHQQQYDC.

The protein belongs to the L6 tetraspanin family. As to quaternary structure, present in high molecular weight complexes in tumor cells. Interacts with SDCBP2.

It is found in the membrane. This chain is Transmembrane 4 L6 family member 1 (TM4SF1), found in Mesocricetus auratus (Golden hamster).